Here is a 345-residue protein sequence, read N- to C-terminus: MNSELFSPYTIKDVTLKNRIVMSPMCMYSSENEDGQVTNFHLIHYGTRAAGQVGLVMIEATAVLPEGRISNKDLGIWDDSLIEGLHKTTTFIHDNGAKAAIQLAHAGRKAELETDALAPSAVPFNETMKIPVEMSIHQIKNTILAFQQAAIRSKQAGFDVIEIHGAHGYLINEFLSPLSNKRTDEYGGSPENRYRFLREIIDSINEVWNGPLFVRISANDYHPDGLTVQDYVQYTKWMKEQGVDLIDCSSGAVVPARIDVYPGYQVQYAKHIKEHANIATGAVGLITTGAQAEQILNNNEADLIFIGRELLRNPYFPRIAANELGFELEEPHQYERAPGKISTNK.

Residue 23-26 (SPMC) participates in FMN binding. Y28 is a substrate binding site. Residues A60 and Q102 each contribute to the FMN site. 164–167 (HGAH) is a substrate binding site. FMN contacts are provided by residues R215 and 307–308 (GR).

This sequence belongs to the NADH:flavin oxidoreductase/NADH oxidase family. NamA subfamily. In terms of assembly, homotetramer. FMN serves as cofactor.

It catalyses the reaction A + NADPH + H(+) = AH2 + NADP(+). In terms of biological role, catalyzes the reduction of the double bond of an array of alpha,beta-unsaturated aldehydes and ketones. It also reduces the nitro group of nitroester and nitroaromatic compounds. It could have a role in detoxification processes. In Bacillus anthracis (strain CDC 684 / NRRL 3495), this protein is NADPH dehydrogenase.